The sequence spans 480 residues: Protein nucleotidyltransferase YdiU (480 aa).

Residues G86, G88, R89, K109, D121, G122, R172, and R179 each contribute to the ATP site. The active-site Proton acceptor is the D248. Mg(2+)-binding residues include N249 and D258. Position 258 (D258) interacts with ATP.

The protein belongs to the SELO family. The cofactor is Mg(2+). Requires Mn(2+) as cofactor.

It catalyses the reaction L-seryl-[protein] + ATP = 3-O-(5'-adenylyl)-L-seryl-[protein] + diphosphate. The enzyme catalyses L-threonyl-[protein] + ATP = 3-O-(5'-adenylyl)-L-threonyl-[protein] + diphosphate. The catalysed reaction is L-tyrosyl-[protein] + ATP = O-(5'-adenylyl)-L-tyrosyl-[protein] + diphosphate. It carries out the reaction L-histidyl-[protein] + UTP = N(tele)-(5'-uridylyl)-L-histidyl-[protein] + diphosphate. It catalyses the reaction L-seryl-[protein] + UTP = O-(5'-uridylyl)-L-seryl-[protein] + diphosphate. The enzyme catalyses L-tyrosyl-[protein] + UTP = O-(5'-uridylyl)-L-tyrosyl-[protein] + diphosphate. Functionally, nucleotidyltransferase involved in the post-translational modification of proteins. It can catalyze the addition of adenosine monophosphate (AMP) or uridine monophosphate (UMP) to a protein, resulting in modifications known as AMPylation and UMPylation. This chain is Protein nucleotidyltransferase YdiU, found in Salmonella paratyphi B (strain ATCC BAA-1250 / SPB7).